The primary structure comprises 332 residues: Cell growth regulator with RING finger domain protein 1 (332 aa).

Residues 274-309 form an RING-type zinc finger; sequence CVVCQNGGVNWVLLPCRHACLCDSCVCYFKQCPMCR.

As to expression, highly expressed in testis, lower levels of expression is seen in skeletal muscle, liver, lung and brain.

Its subcellular location is the nucleus. It is found in the endoplasmic reticulum. Able to inhibit growth in several cell lines. This Rattus norvegicus (Rat) protein is Cell growth regulator with RING finger domain protein 1 (Cgrrf1).